A 178-amino-acid polypeptide reads, in one-letter code: Endoribonuclease YbeY (178 aa).

3 residues coordinate Zn(2+): His118, His122, and His128.

Belongs to the endoribonuclease YbeY family. Zn(2+) serves as cofactor.

Its subcellular location is the cytoplasm. Its function is as follows. Single strand-specific metallo-endoribonuclease involved in late-stage 70S ribosome quality control and in maturation of the 3' terminus of the 16S rRNA. In Mycolicibacterium gilvum (strain PYR-GCK) (Mycobacterium gilvum (strain PYR-GCK)), this protein is Endoribonuclease YbeY.